The chain runs to 477 residues: Exodeoxyribonuclease 7 large subunit (477 aa).

The disordered stretch occupies residues 452–477 (KAAAAPKRVKKSPPPGTSGAQEDLFG).

It belongs to the XseA family. As to quaternary structure, heterooligomer composed of large and small subunits.

Its subcellular location is the cytoplasm. It catalyses the reaction Exonucleolytic cleavage in either 5'- to 3'- or 3'- to 5'-direction to yield nucleoside 5'-phosphates.. Its function is as follows. Bidirectionally degrades single-stranded DNA into large acid-insoluble oligonucleotides, which are then degraded further into small acid-soluble oligonucleotides. The sequence is that of Exodeoxyribonuclease 7 large subunit from Erythrobacter litoralis (strain HTCC2594).